The sequence spans 817 residues: Cargo-transport protein YPP1 (817 aa).

This sequence belongs to the YPP1 family. As to quaternary structure, interacts with STT4 and ribosomes.

It localises to the cytoplasmic granule. It is found in the cell membrane. Involved in endocytosis. This chain is Cargo-transport protein YPP1 (YPP1), found in Saccharomyces cerevisiae (strain YJM789) (Baker's yeast).